The sequence spans 90 residues: U7-theraphotoxin-Hhn1a 5 (90 aa).

The N-terminal stretch at 1–19 is a signal peptide; sequence MKTAIFTVVLALAVFAVLS. A propeptide spanning residues 20–50 is cleaved from the precursor; the sequence is FGWEANEKALSEESTELIHEKEAASETEARE. Intrachain disulfides connect Cys51–Cys65, Cys58–Cys70, and Cys64–Cys81.

This sequence belongs to the neurotoxin 10 (Hwtx-1) family. 13 (Hntx-13) subfamily. Expressed by the venom gland.

The protein localises to the secreted. Its function is as follows. Ion channel inhibitor. This chain is U7-theraphotoxin-Hhn1a 5, found in Cyriopagopus hainanus (Chinese bird spider).